Here is a 760-residue protein sequence, read N- to C-terminus: MRYNQFSYIPTSLERAAEELKELGFDLDLQKTAKANLESFLRKLFFHYPDSDYPLSHLIAKNDMDALSFFQSEQELSKEVFDLLALQVLGFIPGVDFTEADAFLDKLAFPIHFDETEIIKHIHHLLATRCKSGMTLIDDLVSQGMLTMDNDYHFFNGKSLATFDTSQLIREVVYVEAPLDTDQDGQLDLIKVNIIRPQSQKPLPTLMTPSPYHQGINEVANDKKLYRMEKELVVKKRRQITVEDRDFIPLETQPCKLPIGQNLESFSYINSYSLNDYFLARGFANIYVSGVGTAGSTGFMTSGDYAQIESFKAVIDWLNGRATAYTSHSKNHQVRADWANGLVCTTGKSYLGTMSTGLATTGVDGLAMIIAESAISSWYNYYRENGLVCSPGGYPGEDLDVLTELTYSRNLLAGDYLRHNDRYQELLNQQSQALDRQSGDYNQFWHDRNYLKNAHQIKCDVVYTHGLQDWNVKPRQVYEIFNALPSTINKHLFLHQGEHVYMHNWQSIDFRESMNALLCQKLLGLANDFSLPEMIWQDNTCPQNWQERKVFGTSTIKELDLGQELLLIDNHYGEDEFKAYGKDFRAFKAALFEGKANQALVDILLEEDLPINGEIVLQLKVKSSENKGLLSAQILDYGKKKRLGDLPIALTQSSIDNGQNFSREPLKELPFREDSYRVISKGFMNLQNRNNLSSIETIPNNKWMTVRLPLQPTIYHLEKGDTLRVILYTTDFEHTVRDNSNYALTIDLSQSQLIVPIASN.

Catalysis depends on charge relay system residues serine 349, aspartate 469, and histidine 499.

Belongs to the peptidase S15 family. As to quaternary structure, homodimer.

It is found in the cytoplasm. The catalysed reaction is Hydrolyzes Xaa-Pro-|- bonds to release unblocked, N-terminal dipeptides from substrates including Ala-Pro-|-p-nitroanilide and (sequentially) Tyr-Pro-|-Phe-Pro-|-Gly-Pro-|-Ile.. Functionally, removes N-terminal dipeptides sequentially from polypeptides having unsubstituted N-termini provided that the penultimate residue is proline. The polypeptide is Xaa-Pro dipeptidyl-peptidase (Streptococcus pyogenes serotype M2 (strain MGAS10270)).